The primary structure comprises 419 residues: Metacaspase-1A (419 aa).

Residues M1–Q89 are disordered. Polar residues predominate over residues N41–G51. Over residues Y59–Q71 the composition is skewed to low complexity. Catalysis depends on residues H190 and C246.

The protein belongs to the peptidase C14B family.

Its function is as follows. Involved in cell death (apoptosis). This chain is Metacaspase-1A (casA), found in Aspergillus oryzae (strain ATCC 42149 / RIB 40) (Yellow koji mold).